The sequence spans 170 residues: Small ribosomal subunit protein bS16 (170 aa).

Positions Glu-114 to Ser-170 are disordered. Low complexity predominate over residues Pro-142–Ser-170.

Belongs to the bacterial ribosomal protein bS16 family.

The sequence is that of Small ribosomal subunit protein bS16 from Mycobacterium avium (strain 104).